Reading from the N-terminus, the 597-residue chain is Adenine deaminase 2 (597 aa).

Belongs to the metallo-dependent hydrolases superfamily. Adenine deaminase family. Mn(2+) serves as cofactor.

The enzyme catalyses adenine + H2O + H(+) = hypoxanthine + NH4(+). This Agrobacterium fabrum (strain C58 / ATCC 33970) (Agrobacterium tumefaciens (strain C58)) protein is Adenine deaminase 2.